A 427-amino-acid polypeptide reads, in one-letter code: Enolase (427 aa).

Glutamine 163 lines the (2R)-2-phosphoglycerate pocket. Glutamate 205 acts as the Proton donor in catalysis. Positions 242, 285, and 312 each coordinate Mg(2+). 4 residues coordinate (2R)-2-phosphoglycerate: lysine 337, arginine 366, serine 367, and lysine 388. Lysine 337 serves as the catalytic Proton acceptor.

It belongs to the enolase family. Mg(2+) is required as a cofactor.

It is found in the cytoplasm. The protein resides in the secreted. It localises to the cell surface. It catalyses the reaction (2R)-2-phosphoglycerate = phosphoenolpyruvate + H2O. The protein operates within carbohydrate degradation; glycolysis; pyruvate from D-glyceraldehyde 3-phosphate: step 4/5. Functionally, catalyzes the reversible conversion of 2-phosphoglycerate (2-PG) into phosphoenolpyruvate (PEP). It is essential for the degradation of carbohydrates via glycolysis. The protein is Enolase of Ralstonia pickettii (strain 12J).